A 99-amino-acid chain; its full sequence is NADH-quinone oxidoreductase subunit K (99 aa).

Transmembrane regions (helical) follow at residues 3–23 (PANY…GVLV), 28–48 (IVVF…LVTF), and 62–82 (FFVM…ILAI).

This sequence belongs to the complex I subunit 4L family. As to quaternary structure, NDH-1 is composed of 14 different subunits. Subunits NuoA, H, J, K, L, M, N constitute the membrane sector of the complex.

The protein localises to the cell membrane. The catalysed reaction is a quinone + NADH + 5 H(+)(in) = a quinol + NAD(+) + 4 H(+)(out). In terms of biological role, NDH-1 shuttles electrons from NADH, via FMN and iron-sulfur (Fe-S) centers, to quinones in the respiratory chain. The immediate electron acceptor for the enzyme in this species is believed to be a menaquinone. Couples the redox reaction to proton translocation (for every two electrons transferred, four hydrogen ions are translocated across the cytoplasmic membrane), and thus conserves the redox energy in a proton gradient. The protein is NADH-quinone oxidoreductase subunit K of Parafrankia sp. (strain EAN1pec).